Reading from the N-terminus, the 199-residue chain is Dephospho-CoA kinase (199 aa).

Residues 11–199 (RIGLTGGIAS…DLHDQLDALL (189 aa)) enclose the DPCK domain. 19–24 (ASGKSS) contacts ATP.

The protein belongs to the CoaE family.

It is found in the cytoplasm. It catalyses the reaction 3'-dephospho-CoA + ATP = ADP + CoA + H(+). It participates in cofactor biosynthesis; coenzyme A biosynthesis; CoA from (R)-pantothenate: step 5/5. Its function is as follows. Catalyzes the phosphorylation of the 3'-hydroxyl group of dephosphocoenzyme A to form coenzyme A. The chain is Dephospho-CoA kinase from Synechococcus sp. (strain CC9902).